An 88-amino-acid chain; its full sequence is Acylphosphatase (88 aa).

In terms of domain architecture, Acylphosphatase-like spans 3–88 (AARFVVSGVV…VPPTEDFVTG (86 aa)). Residues Arg-18 and Asn-36 contribute to the active site.

The protein belongs to the acylphosphatase family.

It catalyses the reaction an acyl phosphate + H2O = a carboxylate + phosphate + H(+). The sequence is that of Acylphosphatase (acyP) from Xanthomonas euvesicatoria pv. vesicatoria (strain 85-10) (Xanthomonas campestris pv. vesicatoria).